Consider the following 840-residue polypeptide: Kinesin-like protein KIN-14J (840 aa).

Residues 1-74 (MEADPAPSST…KGEEPVVSAE (74 aa)) are disordered. Residues 177 to 501 (NIRVFCRCRP…LNFASRVRAI (325 aa)) form the Kinesin motor domain. 260–267 (GQTGTGKT) contacts ATP. Residues 517-594 (KLKQMTEKIR…KKAARDTARS (78 aa)) are a coiled coil. Basic and acidic residues predominate over residues 581-593 (LANEKKAARDTAR). A disordered region spans residues 581 to 617 (LANEKKAARDTARSTKPPLAPMRQRPPLGRIGNHIPP).

The protein belongs to the TRAFAC class myosin-kinesin ATPase superfamily. Kinesin family. KIN-14 subfamily.

This is Kinesin-like protein KIN-14J from Oryza sativa subsp. japonica (Rice).